Consider the following 436-residue polypeptide: Glutamyl-tRNA reductase (436 aa).

Residues 49-52 (TCNR), S109, 114-116 (EGQ), and Q120 each bind substrate. C50 (nucleophile) is an active-site residue. Residue 198–203 (GAGRMS) participates in NADP(+) binding.

This sequence belongs to the glutamyl-tRNA reductase family. In terms of assembly, homodimer.

It catalyses the reaction (S)-4-amino-5-oxopentanoate + tRNA(Glu) + NADP(+) = L-glutamyl-tRNA(Glu) + NADPH + H(+). Its pathway is porphyrin-containing compound metabolism; protoporphyrin-IX biosynthesis; 5-aminolevulinate from L-glutamyl-tRNA(Glu): step 1/2. The protein operates within porphyrin-containing compound metabolism; chlorophyll biosynthesis. Functionally, catalyzes the NADPH-dependent reduction of glutamyl-tRNA(Glu) to glutamate 1-semialdehyde (GSA). The chain is Glutamyl-tRNA reductase from Prochlorococcus marinus (strain MIT 9312).